Reading from the N-terminus, the 119-residue chain is Large ribosomal subunit protein uL18 (119 aa).

This sequence belongs to the universal ribosomal protein uL18 family. Part of the 50S ribosomal subunit; part of the 5S rRNA/L5/L18/L25 subcomplex. Contacts the 5S and 23S rRNAs.

In terms of biological role, this is one of the proteins that bind and probably mediate the attachment of the 5S RNA into the large ribosomal subunit, where it forms part of the central protuberance. This chain is Large ribosomal subunit protein uL18, found in Xylella fastidiosa (strain 9a5c).